A 638-amino-acid chain; its full sequence is Chaperone protein DnaK (638 aa).

Threonine 200 is modified (phosphothreonine; by autocatalysis). Positions 599–623 are disordered; sequence LHMAATAEQQSASTGAGAGSSAKVD. Residues 609-620 show a composition bias toward low complexity; that stretch reads SASTGAGAGSSA.

Belongs to the heat shock protein 70 family.

Functionally, acts as a chaperone. The protein is Chaperone protein DnaK of Xylella fastidiosa (strain M12).